Reading from the N-terminus, the 707-residue chain is Casein kinase 1-like protein HD16 (707 aa).

The disordered stretch occupies residues 19–67 (YDVQDADPAASPVSPAPRGRTGRRGGAAAGRGNKTVAEGGGRKALKPRG). Low complexity predominate over residues 24–37 (ADPAASPVSPAPRG). Residues 147-425 (YITDRKLGKG…KLISLFDGLI (279 aa)) form the Protein kinase domain. Residues 153-161 (LGKGGFGQV) and Lys-184 each bind ATP. Asp-276 functions as the Proton acceptor in the catalytic mechanism.

This sequence belongs to the protein kinase superfamily. CK1 Ser/Thr protein kinase family. Casein kinase I subfamily. Monomer. Interacts with GHD7 (via C-terminus). Interacts with SLR1. Autophosphorylated. In terms of tissue distribution, expressed in roots, leaves and stems. Expressed in leaf vascular bundles, and proximal regions of the shoot and roots.

The protein resides in the cytoplasm. It is found in the nucleus. The catalysed reaction is L-seryl-[protein] + ATP = O-phospho-L-seryl-[protein] + ADP + H(+). It carries out the reaction L-threonyl-[protein] + ATP = O-phospho-L-threonyl-[protein] + ADP + H(+). Functionally, casein kinases are operationally defined by their preferential utilization of acidic proteins such as caseins as substrates. It can phosphorylate a large number of proteins. Can phosphorylate casein on threonine residues in vitro. Involved in the regulation of flowering time through gibberellin (GA) signaling, and independently of photoperiod. Phosphorylates the DELLA protein SLR1, stabilizing SLR1 protein and sustaining SLR1 activity as repressor of GA signaling. Required for normal development of male floral organs and grains, through modulation of GA signaling. Targeted and repressed by the homeobox protein HAZ1 during GA signaling. Can phosphorylate phosvitin and SLR1 in vitro. Is not required for clock function in either the presence or the absence of light signals. Involved in a genetic control pathway for photoperiodic flowering under long day (LD) conditions that includes HD1, GHD7, HD5 and HD2. Phosphorylates and activates GHD7, a major floral repressor under LD conditions. Phosphorylation of GHD7 enhances its function in the repression of EHD1, HD3A and HD3B/RFT1, and obviously delaying flowering. This is Casein kinase 1-like protein HD16 from Oryza sativa subsp. japonica (Rice).